The sequence spans 456 residues: Adenylosuccinate synthetase isozyme 2 (456 aa).

Residues 1-14 show a composition bias toward polar residues; sequence MSISESSPAATSLP. Residues 1-24 form a disordered region; the sequence is MSISESSPAATSLPNGDCGRPRAR. GTP is bound by residues 39–45 and 67–69; these read GDEGKGK and GHT. Residue D40 is the Proton acceptor of the active site. The Mg(2+) site is built by D40 and G67. Residue D40 coordinates substrate. IMP contacts are provided by residues 40-43, 65-68, T162, R176, N255, T270, and R334; these read DEGK and NAGH. H68 acts as the Proton donor in catalysis. 330 to 336 contributes to the substrate binding site; that stretch reads VTTGRKR. GTP is bound by residues R336, 362–364, and 444–447; these read KLD and GVGK.

The protein belongs to the adenylosuccinate synthetase family. In terms of assembly, homodimer. It depends on Mg(2+) as a cofactor.

It is found in the cytoplasm. It localises to the mitochondrion. It carries out the reaction IMP + L-aspartate + GTP = N(6)-(1,2-dicarboxyethyl)-AMP + GDP + phosphate + 2 H(+). The protein operates within purine metabolism; AMP biosynthesis via de novo pathway; AMP from IMP: step 1/2. With respect to regulation, inhibited competitively by AMP and IMP and non-competitively by fructose 1,6-bisphosphate. Its function is as follows. Plays an important role in the de novo pathway and in the salvage pathway of purine nucleotide biosynthesis. Catalyzes the first committed step in the biosynthesis of AMP from IMP. This Mus musculus (Mouse) protein is Adenylosuccinate synthetase isozyme 2 (Adss2).